We begin with the raw amino-acid sequence, 514 residues long: Maturase K (514 aa).

The protein belongs to the intron maturase 2 family. MatK subfamily.

The protein localises to the plastid. The protein resides in the chloroplast. Functionally, usually encoded in the trnK tRNA gene intron. Probably assists in splicing its own and other chloroplast group II introns. This chain is Maturase K, found in Lepidozamia peroffskyana (Peroffsky's lepidozamia).